We begin with the raw amino-acid sequence, 1020 residues long: MMSFGGADALLGAPFAPLHGGGSLHYALARKGGAGGTRSAAGSSSGFHSWTRTSVSSVSASPSRFRGAGAASSTDSLDTLSNGPEGCMVAVATSRSEKEQLQALNDRFAGYIDKVRQLEAHNRSLEGEAAALRQQQAGRSAMGELYEREVREMRGAVLRLGAARGQLRLEQEHLLEDIAHVRQRLDDEARQREEAEAAARALARFAQEAEAARVDLQKKAQALQEECGYLRRHHQEEVGELLGQIQGSGAAQAQMQAETRDALKCDVTSALREIRAQLEGHAVQSTLQSEEWFRVRLDRLSEAAKVNTDAMRSAQEEITEYRRQLQARTTELEALKSTKDSLERQRSELEDRHQADIASYQEAIQQLDAELRNTKWEMAAQLREYQDLLNVKMALDIEIAAYRKLLEGEECRIGFGPIPFSLPEGLPKIPSVSTHIKVKSEEKIKVVEKSEKETVIVEEQTEETQVTEEVTEEEEKEAKEEEGKEEEGGEEEEAEGGEEETKSPPAEEAASPEKEAKSPVKEEAKSPAEAKSPEKEEAKSPAEVKSPEKAKSPAKEEAKSPPEAKSPEKEEAKSPAEVKSPEKAKSPAKEEAKSPAEAKSPEKAKSPVKEEAKSPAEAKSPVKEEAKSPAEVKSPEKAKSPTKEEAKSPEKAKSPEKEEAKSPEKAKSPVKAEAKSPEKAKSPVKAEAKSPEKAKSPVKEEAKSPEKAKSPVKEEAKSPEKAKSPVKEEAKTPEKAKSPVKEEAKSPEKAKSPEKAKTLDVKSPEAKTPAKEEARSPADKFPEKAKSPVKEEVKSPEKAKSPLKEDAKAPEKEIPKKEEVKSPVKEEEKPQEVKVKEPPKKAEEEKAPATPKTEEKKDSKKEEAPKKEAPKPKVEEKKEPAVEKPKESKVEAKKEEAEDKKKVPTPEKEAPAKVEVKEDAKPKEKTEVAKKEPDDAKAKEPSKPAEKKEAAPEKKDTKEEKAKKPEEKPKTEAKAKEDDKTLSKEPSKPKAEKAEKSSSTDQKDSKPPEKATEDKAAKGK.

The interval 1–100 (MMSFGGADAL…VATSRSEKEQ (100 aa)) is head. The tract at residues 58 to 83 (VSASPSRFRGAGAASSTDSLDTLSNG) is disordered. Residues 71–82 (ASSTDSLDTLSN) show a composition bias toward polar residues. S76 and S124 each carry phosphoserine. Residues 97–413 (EKEQLQALND…KLLEGEECRI (317 aa)) form the IF rod domain. The interval 101–132 (LQALNDRFAGYIDKVRQLEAHNRSLEGEAAAL) is coil 1A. The tract at residues 133–145 (RQQQAGRSAMGEL) is linker 1. The segment at 146-244 (YEREVREMRG…QEEVGELLGQ (99 aa)) is coil 1B. The linker 12 stretch occupies residues 245–266 (IQGSGAAQAQMQAETRDALKCD). The coil 2A stretch occupies residues 267-288 (VTSALREIRAQLEGHAVQSTLQ). Residues 289-292 (SEEW) form a linker 2 region. Residues 293–413 (FRVRLDRLSE…KLLEGEECRI (121 aa)) form a coil 2B region. Phosphoserine occurs at positions 347 and 421. Residues 414–1020 (GFGPIPFSLP…ATEDKAAKGK (607 aa)) form a tail region. Residues 456-1020 (IVEEQTEETQ…ATEDKAAKGK (565 aa)) form a disordered region. Acidic residues-rich tracts occupy residues 459 to 475 (EQTE…EEEE) and 483 to 498 (GKEE…EGGE). Residues S511, S526, S532, S540, S546, S552, S560, S566, S574, S580, S586, S594, S600, S606, S614, S620, S628, S634, S640, S648, S654, S662, S668, S676, S682, S690, S696, and S704 each carry the phosphoserine modification. The segment covering 511 to 1020 (SPEKEAKSPV…ATEDKAAKGK (510 aa)) has biased composition (basic and acidic residues). 4 repeat units span residues 525-530 (KSPAEA), 531-536 (KSPEKE), 539-544 (KSPAEV), and 545-550 (KSPEKA). The interval 525 to 826 (KSPAEAKSPE…KEEVKSPVKE (302 aa)) is 30 X 6 AA repeats of K-S-P-[AEPV]-[EAK]-[AEVK]. Repeat 5 spans residues 559–564 (KSPPEA). Repeat copies occupy residues 573–578 (KSPAEV) and 579–584 (KSPEKA). 2 tandem repeats follow at residues 593-598 (KSPAEA) and 599-604 (KSPEKA). Repeat 10 spans residues 613–618 (KSPAEA). Tandem repeats lie at residues 627-632 (KSPAEV), 633-638 (KSPEKA), 639-644 (KSPTKE), and 647-652 (KSPEKA). Repeat copies occupy residues 661-666 (KSPEKA), 667-672 (KSPVKA), 675-680 (KSPEKA), 681-686 (KSPVKA), 689-694 (KSPEKA), 695-700 (KSPVKE), 703-708 (KSPEKA), 709-714 (KSPVKE), 717-722 (KSPEKA), 723-728 (KSPVKE), 737-742 (KSPVKE), and 745-750 (KSPEKA). A phosphoserine mark is found at S718, S724, and S738. Phosphoserine occurs at positions 752 and 763. The stretch at 762–767 (KSPEAK) is repeat 27. T768 is modified (phosphothreonine). Tandem repeats lie at residues 786-791 (KSPVKE), 794-799 (KSPEKA), and 821-826 (KSPVKE). Residues S787, S795, S822, and S888 each carry the phosphoserine modification.

Belongs to the intermediate filament family. In terms of assembly, forms heterodimers with NEFL; which can further hetero-oligomerize (in vitro). Forms heterodimers with INA (in vitro). There are a number of repeats of the tripeptide K-S-P, NFH is phosphorylated on a number of the serines in this motif. It is thought that phosphorylation of NFH results in the formation of interfilament cross bridges that are important in the maintenance of axonal caliber. In terms of processing, phosphorylation seems to play a major role in the functioning of the larger neurofilament polypeptides (NF-M and NF-H), the levels of phosphorylation being altered developmentally and coincidentally with a change in the neurofilament function. Post-translationally, phosphorylated in the head and rod regions by the PKC kinase PKN1, leading to the inhibition of polymerization.

The protein localises to the cytoplasm. It is found in the cytoskeleton. Its subcellular location is the cell projection. It localises to the axon. In terms of biological role, neurofilaments usually contain three intermediate filament proteins: NEFL, NEFM, and NEFH which are involved in the maintenance of neuronal caliber. NEFH has an important function in mature axons that is not subserved by the two smaller NF proteins. May additionally cooperate with the neuronal intermediate filament proteins PRPH and INA to form neuronal filamentous networks. In Homo sapiens (Human), this protein is Neurofilament heavy polypeptide (NEFH).